The following is a 228-amino-acid chain: UPF0758 protein CLD_1541 (228 aa).

One can recognise an MPN domain in the interval 106–228 (KINTPLDVSN…YVSMKEKGTI (123 aa)). Residues H177, H179, and D190 each coordinate Zn(2+). Positions 177-190 (HNHPSGDPTPSKED) match the JAMM motif motif.

This sequence belongs to the UPF0758 family.

In Clostridium botulinum (strain Okra / Type B1), this protein is UPF0758 protein CLD_1541.